Here is a 73-residue protein sequence, read N- to C-terminus: Large ribosomal subunit protein bL31 (73 aa).

The protein belongs to the bacterial ribosomal protein bL31 family. Type A subfamily. Part of the 50S ribosomal subunit.

Binds the 23S rRNA. This chain is Large ribosomal subunit protein bL31, found in Ruegeria sp. (strain TM1040) (Silicibacter sp.).